The chain runs to 184 residues: ATP-dependent protease subunit HslV (184 aa).

The active site involves T12. The Na(+) site is built by A167, C170, and T173.

Belongs to the peptidase T1B family. HslV subfamily. In terms of assembly, a double ring-shaped homohexamer of HslV is capped on each side by a ring-shaped HslU homohexamer. The assembly of the HslU/HslV complex is dependent on binding of ATP.

The protein resides in the cytoplasm. It carries out the reaction ATP-dependent cleavage of peptide bonds with broad specificity.. Its activity is regulated as follows. Allosterically activated by HslU binding. In terms of biological role, protease subunit of a proteasome-like degradation complex believed to be a general protein degrading machinery. This chain is ATP-dependent protease subunit HslV, found in Wolbachia pipientis subsp. Culex pipiens (strain wPip).